A 519-amino-acid chain; its full sequence is Probable anion transporter 3, chloroplastic (519 aa).

The transit peptide at 1-76 (MAPPGQLLPL…PPPPATSLPG (76 aa)) directs the protein to the chloroplast. Over residues 56 to 72 (LPFAPPRRLSRPPPPAT) the composition is skewed to pro residues. The segment at 56–82 (LPFAPPRRLSRPPPPATSLPGASPGGG) is disordered. Transmembrane regions (helical) follow at residues 100–120 (VAAMLGLALALCNADRVVMSV), 138–158 (VVQSSFLWGYLVSPIIGGALV), 166–186 (VMAYGVALWSLATFLSPWAAA), 188–208 (SLWLFLSTRVLLGMAEGVALP), 229–249 (IAMAGFQLGNTIGLLLSPIIM), 253–273 (GIFGPFVIFGLFGFLWVLVWI), 326–346 (WALISANAMHSWGYFVILSWM), 362–382 (AWFSALPWVMMAVLGYVAGVV), 403–423 (IGFVGPGVALLGLNAAKSPVI), 424–444 (ASAWLTIAVGLKSFGHSGFLV), 460–480 (MSNTAGTFAAILGTVGAGFFV), and 488–508 (GFLILTSLLYFSSTLFWDIFA).

Belongs to the major facilitator superfamily. Sodium/anion cotransporter (TC 2.A.1.14) family.

It is found in the plastid. The protein resides in the chloroplast membrane. Probable anion transporter. The protein is Probable anion transporter 3, chloroplastic (PHT4;3) of Oryza sativa subsp. japonica (Rice).